The primary structure comprises 140 residues: MLMPKKVKYRKQMKGRMTGTPQRGVELAFGDFGLQATECGWLDSRQIEAARIAMTRYIKRGGKIWIRIFPDKPLTSKPAETRMGKGKGSPDSWVCVIKPGRILYEMEGVTEEVAREAFRLAAHKLPVASKFITRTEINEG.

Belongs to the universal ribosomal protein uL16 family. Part of the 50S ribosomal subunit.

Its function is as follows. Binds 23S rRNA and is also seen to make contacts with the A and possibly P site tRNAs. This chain is Large ribosomal subunit protein uL16, found in Citrifermentans bemidjiense (strain ATCC BAA-1014 / DSM 16622 / JCM 12645 / Bem) (Geobacter bemidjiensis).